A 192-amino-acid polypeptide reads, in one-letter code: Putative manganese efflux pump MntP (192 aa).

Transmembrane regions (helical) follow at residues 3 to 23, 36 to 56, 65 to 85, 112 to 132, 136 to 156, and 171 to 191; these read FSAI…VAAA, VLLV…IGWL, VQAW…GKML, FVLA…LPML, FAIS…AGLF, and LAGG…HLVL.

This sequence belongs to the MntP (TC 9.B.29) family.

It is found in the cell inner membrane. Probably functions as a manganese efflux pump. The protein is Putative manganese efflux pump MntP of Sorangium cellulosum (strain So ce56) (Polyangium cellulosum (strain So ce56)).